The following is a 425-amino-acid chain: Histone-binding protein RBBP4 (425 aa).

Residue A2 is modified to N-acetylalanine. At K4 the chain carries N6-acetyllysine; alternate. A Glycyl lysine isopeptide (Lys-Gly) (interchain with G-Cter in SUMO2); alternate cross-link involves residue K4. K4 is covalently cross-linked (Glycyl lysine isopeptide (Lys-Gly) (interchain with G-Cter in ubiquitin); alternate). WD repeat units follow at residues Y32 to G125, E126 to G175, H176 to F223, G225 to D270, A271 to E314, S315 to G371, and G372 to M404. S110 is modified (phosphoserine). Residue K160 is modified to N6-acetyllysine; alternate. Residue K160 forms a Glycyl lysine isopeptide (Lys-Gly) (interchain with G-Cter in SUMO2); alternate linkage. S355 is modified (phosphoserine).

This sequence belongs to the WD repeat RBAP46/RBAP48/MSI1 family. As to quaternary structure, binds directly to helix 1 of the histone fold of histone H4, a region that is not accessible when H4 is in chromatin. Subunit of the chromatin assembly factor 1 (CAF-1) complex, which is composed of RBBP4, CHAF1B and CHAF1A. Subunit of the core histone deacetylase (HDAC) complex, which is composed of HDAC1, HDAC2, RBBP4 and RBBP7. The core HDAC complex associates with SIN3A, ARID4B/SAP180, SAP18, SAP30, SAP130, SUDS3/SAP45 and possibly ARID4A/RBP1 and ING1 to form the SIN3 HDAC complex. Component of the nucleosome remodeling and deacetylase (NuRD) repressor complex, composed of core proteins MTA1, MTA2, MTA3, RBBP4, RBBP7, HDAC1, HDAC2, MBD2, MBD3, and peripherally associated proteins CDK2AP1, CDK2AP2, GATAD2A, GATAD2B, CHD3, CHD4 and CHD5. The exact stoichiometry of the NuRD complex is unknown, and some subunits such as MBD2 and MBD3, GATAD2A and GATAD2B, and CHD3, CHD4 and CHD5 define mutually exclusive NuRD complexes. Interacts with ZNF512B; the interaction is direct and may play a role in repressing gene expression. The NuRD complex may also interact with MBD3L1 and MBD3L2. Component of the PRC2 complex, which consists of the core subunits EED, EZH1 or EZH2, SUZ12, and RBBP4, and various combinations of accessory subunits including AEBP2, JARID2, PHF19, MTF2 and EPOP. Forms a monomeric PRC2.2 (class 2) complex consisting of at least SUZ12, RBBP4, AEBP2 and JARID2. Forms a dimeric PRC2.1 (class 1, PRC-PCL) complex consisting of at least SUZ12, RBBP4, and PHF19; PHF19 stabilizes the dimeric structure which enhances PRC2 interaction with chromatin. Component of the NURF-1 ISWI chromatin remodeling complex (also called the nucleosome-remodeling factor (NURF) complex) at least composed of SMARCA1 (isoform 2), BPTF, RBBP4 and RBBP7. Within the complex interacts with isoform 2 of SMARCA1. Component of the BPFT-SMARCA1 complex at least composed of SMARCA1 (isoform 1), BPFT, RBBP4 and RBBP7; the complex is catalytically inactive and does not remodel chromatin. Within the complex interacts with isoform 1 of SMARCA1. Interacts with the ISWI chromatin remodeling complex component SMARCA5; the interaction is direct. Interacts with the viral protein-binding domain of the retinoblastoma protein (RB1). Component of the DREAM complex (also named LINC complex) at least composed of E2F4, E2F5, LIN9, LIN37, LIN52, LIN54, MYBL1, MYBL2, RBL1, RBL2, RBBP4, TFDP1 and TFDP2. The complex exists in quiescent cells where it represses cell cycle-dependent genes. It dissociates in S phase when LIN9, LIN37, LIN52 and LIN54 form a subcomplex that binds to MYBL2. Found in a complex composed of at least SINHCAF, SIN3A, HDAC1, SAP30, RBBP4, OGT and TET1. Interacts with ZNF827; the interaction is direct and recruits RBBP4 to telomeres. Interacts with MTA1; the interaction is direct and mutually exclusive with binding histone H4. Interacts with ARMC12 (via ARM domains). Interacts with BRCA1. Interacts with CDK2AP1. Interacts with CREBBP, and this interaction may be enhanced by the binding of phosphorylated CREB1 to CREBBP. Interacts with ERCC6. Interacts with HDAC7. Interacts with PHF6. Interacts with PWWP2B. Interacts with SPEN/MINT. Interacts with SUV39H1.

The protein localises to the nucleus. It is found in the chromosome. It localises to the telomere. Functionally, core histone-binding subunit that may target chromatin assembly factors, chromatin remodeling factors and histone deacetylases to their histone substrates in a manner that is regulated by nucleosomal DNA. Component of the chromatin assembly factor 1 (CAF-1) complex, which is required for chromatin assembly following DNA replication and DNA repair. Component of the core histone deacetylase (HDAC) complex, which promotes histone deacetylation and consequent transcriptional repression. Component of the nucleosome remodeling and histone deacetylase complex (the NuRD complex), which promotes transcriptional repression by histone deacetylation and nucleosome remodeling. Component of the PRC2 complex, which promotes repression of homeotic genes during development. Component of the NURF (nucleosome remodeling factor) complex. This Bos taurus (Bovine) protein is Histone-binding protein RBBP4 (RBBP4).